The sequence spans 414 residues: MNFLQKPRGVKDWFGDELVYFNWIVKKIRSLAFNWGFSEVKTPLFENAQLFQRSNANADIVQKELYQFFDKSQRELALRPEATTPIVRLACENKLMQEANFPLKLFCIGSMYRYERPQNNRFREHWQFSCEVFGFSNLFIFLDTLLFANSLLEALGITGYVLKINNLANFETLSKWNKALKDYLTPYKLELTELSQKRLEKNPLRILDDKIDQKKSFVKNAPKITDFLDASAKQDSELLKTQLKKHNISFEWTDNLVRGLDYYTGFVFEYVKNQDTILAGGVYDNLVEELSSNPTPALGFACGIERLINCLEIDKKAFILNTKPKQMLVICLFEEALEELVWLAKLWREYNQVTIYPKVIKVDNGIRLANRLGYTFIGIVGKTDFDKKAITIKNLVSKQQTIYTWNELGERNVF.

This sequence belongs to the class-II aminoacyl-tRNA synthetase family. Homodimer.

Its subcellular location is the cytoplasm. The enzyme catalyses tRNA(His) + L-histidine + ATP = L-histidyl-tRNA(His) + AMP + diphosphate + H(+). The chain is Histidine--tRNA ligase (hisS) from Mycoplasma genitalium (strain ATCC 33530 / DSM 19775 / NCTC 10195 / G37) (Mycoplasmoides genitalium).